The primary structure comprises 126 residues: Profilin (126 aa).

Belongs to the profilin family. In terms of assembly, occurs in many kinds of cells as a complex with monomeric actin in a 1:1 ratio.

Its subcellular location is the cytoplasm. The protein localises to the cytoskeleton. In terms of biological role, binds to actin and affects the structure of the cytoskeleton. At high concentrations, profilin prevents the polymerization of actin, whereas it enhances it at low concentrations. By binding to PIP2, it inhibits the formation of IP3 and DG. This is Profilin from Bombyx mori (Silk moth).